The following is a 375-amino-acid chain: Quinolinate synthase (375 aa).

Positions 47 and 64 each coordinate iminosuccinate. Cys-110 is a [4Fe-4S] cluster binding site. Iminosuccinate is bound by residues 144-146 (YVN) and Ser-165. Cys-235 lines the [4Fe-4S] cluster pocket. Iminosuccinate is bound by residues 261–263 (HPE) and Thr-278. Cys-325 contributes to the [4Fe-4S] cluster binding site.

This sequence belongs to the quinolinate synthase family. Type 3 subfamily. Requires [4Fe-4S] cluster as cofactor.

Its subcellular location is the cytoplasm. The enzyme catalyses iminosuccinate + dihydroxyacetone phosphate = quinolinate + phosphate + 2 H2O + H(+). It participates in cofactor biosynthesis; NAD(+) biosynthesis; quinolinate from iminoaspartate: step 1/1. Functionally, catalyzes the condensation of iminoaspartate with dihydroxyacetone phosphate to form quinolinate. The sequence is that of Quinolinate synthase from Herpetosiphon aurantiacus (strain ATCC 23779 / DSM 785 / 114-95).